The primary structure comprises 154 residues: Large ribosomal subunit protein uL30 (154 aa).

It belongs to the universal ribosomal protein uL30 family. As to quaternary structure, part of the 50S ribosomal subunit.

The sequence is that of Large ribosomal subunit protein uL30 from Methanoregula boonei (strain DSM 21154 / JCM 14090 / 6A8).